Reading from the N-terminus, the 432-residue chain is Amino-acid acetyltransferase (432 aa).

Positions glutamate 286–serine 425 constitute an N-acetyltransferase domain.

It belongs to the acetyltransferase family. ArgA subfamily.

It localises to the cytoplasm. The enzyme catalyses L-glutamate + acetyl-CoA = N-acetyl-L-glutamate + CoA + H(+). The protein operates within amino-acid biosynthesis; L-arginine biosynthesis; N(2)-acetyl-L-ornithine from L-glutamate: step 1/4. The protein is Amino-acid acetyltransferase of Pseudomonas putida (strain GB-1).